The following is a 516-amino-acid chain: Cytochrome P450 monooxygenase asR2 (516 aa).

Residues 9–29 traverse the membrane as a helical segment; the sequence is LNSITFSLLVFLGFVGVSQLI. Residues asparagine 248 and asparagine 273 are each glycosylated (N-linked (GlcNAc...) asparagine). Residue cysteine 461 participates in heme binding.

Belongs to the cytochrome P450 family. Heme is required as a cofactor.

It is found in the membrane. It participates in secondary metabolite biosynthesis; terpenoid biosynthesis. Its function is as follows. Cytochrome P450 monooxygenase; part of the gene cluster that mediates the biosynthesis of xenovulene A, an unusual meroterpenoid that has potent inhibitory effects on the human gamma-aminobutyrate A (GABAA) benzodiazepine receptor. The first step of xenovulene A biosynthesis is the biosynthesis of 3-methylorcinaldehyde performed by the non-reducing polyketide synthase aspks1. The salicylate hydroxylase asL1 then catalyzes the oxidative dearomatization of 3-methylorcinaldehyde to yield a dearomatized hydroxycyclohexadione. The 2-oxoglutarate-dependent dioxygenase asL3 further catalyzes the oxidative ring expansion to provide the first tropolone metabolite. The cytochrome P450 monooxygenase asR2 allows the synthesis of tropolone hemiacetal. In parallel, a previously unrecognised class of terpene cyclase, asR6, produces alpha-humulene from farnesylpyrophosphate (FPP). The putative Diels-Alderase asR5 probably catalyzes the formation of the tropolone-humulene skeleton by linking humulene and the polyketide moiety. Oxidative-ring contractions catalyzed by asL4 and asL6 then processively remove carbon atoms from the polyketide to yield xenovulene A. The polypeptide is Cytochrome P450 monooxygenase asR2 (Sarocladium schorii (Acremonium strictum (strain IMI 501407))).